A 727-amino-acid polypeptide reads, in one-letter code: Glycerol-3-phosphate dehydrogenase, mitochondrial (727 aa).

The N-terminal 42 residues, 1-42, are a transit peptide targeting the mitochondrion; that stretch reads MAFQKAVKRTVLVCGGALATVLGLSQCSHYRRKQVNLACLKA. Residue 71–99 participates in FAD binding; that stretch reads DILVIGGGATGSGCALDAVTRGLKTALVE. Tyr601 bears the Phosphotyrosine mark. 2 EF-hand domains span residues 623-658 and 659-694; these read SDIERYTKRFHKFDADEKGFITIVDVQRVLENINVK and IDENTLHEILSEVDLNKNGQVELNEFLQLMSAIQKG. Residues Asp672, Asn674, Asn676, Gln678, and Glu683 each contribute to the Ca(2+) site.

This sequence belongs to the FAD-dependent glycerol-3-phosphate dehydrogenase family. It depends on FAD as a cofactor.

The protein resides in the mitochondrion. It catalyses the reaction a quinone + sn-glycerol 3-phosphate = dihydroxyacetone phosphate + a quinol. It functions in the pathway polyol metabolism; glycerol degradation via glycerol kinase pathway; glycerone phosphate from sn-glycerol 3-phosphate (aerobic route): step 1/1. Its activity is regulated as follows. Calcium-binding enhance the activity of the enzyme. Its function is as follows. Calcium-responsive mitochondrial glycerol-3-phosphate dehydrogenase which seems to be a key component of the pancreatic beta-cell glucose-sensing device. In Mesocricetus auratus (Golden hamster), this protein is Glycerol-3-phosphate dehydrogenase, mitochondrial (GPD2).